The following is a 138-amino-acid chain: uncharacterized protein (138 aa).

The tract at residues 1–73 (MCSAGQLLGG…NHTGEPVGDD (73 aa)) is disordered. The span at 7–18 (LLGGGGGGGGSG) shows a compositional bias: gly residues. The span at 19–29 (GERDEDRDALA) shows a compositional bias: basic and acidic residues. Residues 30–43 (ERAAAGTEQESGAS) show a composition bias toward low complexity. Residues 106-126 (VIVIFFWVMLWFLGLPAFGLV) form a helical membrane-spanning segment.

It belongs to the FAM241 family.

It is found in the membrane. This is an uncharacterized protein from Bos taurus (Bovine).